Consider the following 308-residue polypeptide: Methionine synthase (308 aa).

Residues His192, Cys194, Glu215, and Cys282 each coordinate Zn(2+).

It belongs to the archaeal MetE family. Zn(2+) is required as a cofactor.

It functions in the pathway amino-acid biosynthesis; L-methionine biosynthesis via de novo pathway. Catalyzes the transfer of a methyl group to L-homocysteine resulting in methionine formation. Can use methylcobalamin and methylcobinamide as methyl donors, but methylcobalamin is not considered to be the physiological substrate. The protein is Methionine synthase of Methanocaldococcus jannaschii (strain ATCC 43067 / DSM 2661 / JAL-1 / JCM 10045 / NBRC 100440) (Methanococcus jannaschii).